A 641-amino-acid chain; its full sequence is 1-deoxy-D-xylulose-5-phosphate synthase (641 aa).

Thiamine diphosphate-binding positions include His-71 and Ser-112–Ala-114. A Mg(2+)-binding site is contributed by Asp-144. Thiamine diphosphate is bound by residues Gly-145–Ala-146, Asn-174, Tyr-285, and Glu-366. Asn-174 contributes to the Mg(2+) binding site.

Belongs to the transketolase family. DXPS subfamily. As to quaternary structure, homodimer. It depends on Mg(2+) as a cofactor. Requires thiamine diphosphate as cofactor.

It catalyses the reaction D-glyceraldehyde 3-phosphate + pyruvate + H(+) = 1-deoxy-D-xylulose 5-phosphate + CO2. It functions in the pathway metabolic intermediate biosynthesis; 1-deoxy-D-xylulose 5-phosphate biosynthesis; 1-deoxy-D-xylulose 5-phosphate from D-glyceraldehyde 3-phosphate and pyruvate: step 1/1. Functionally, catalyzes the acyloin condensation reaction between C atoms 2 and 3 of pyruvate and glyceraldehyde 3-phosphate to yield 1-deoxy-D-xylulose-5-phosphate (DXP). The sequence is that of 1-deoxy-D-xylulose-5-phosphate synthase from Mycobacteroides abscessus (strain ATCC 19977 / DSM 44196 / CCUG 20993 / CIP 104536 / JCM 13569 / NCTC 13031 / TMC 1543 / L948) (Mycobacterium abscessus).